Here is a 101-residue protein sequence, read N- to C-terminus: MTRVSIDRNLLDRPYQTNLTYMVHHQSSQSPHSYRTLLEHSRLEIDSLYRRLEGTFSQQHHHRQQHTLAFAFCGRANTFISCFISFASLIRLLTYLLRKIE.

Residues 68–90 (LAFAFCGRANTFISCFISFASLI) traverse the membrane as a helical segment.

The protein localises to the membrane. This is an uncharacterized protein from Saccharomyces cerevisiae (strain ATCC 204508 / S288c) (Baker's yeast).